A 116-amino-acid polypeptide reads, in one-letter code: HTH-type transcriptional regulator SarV (116 aa).

The H-T-H motif DNA-binding region spans 51 to 74 (RDTLHFEMLWDTSKIDVIIRKIYK).

The protein belongs to the SarA family.

The protein resides in the cytoplasm. Its function is as follows. Part of the pathway by which MgrA and SarA control autolysis. The sequence is that of HTH-type transcriptional regulator SarV (sarV) from Staphylococcus aureus (strain Mu50 / ATCC 700699).